Reading from the N-terminus, the 721-residue chain is bZIP transcription factor 17 (721 aa).

Disordered regions lie at residues 1 to 51 (MAEP…LMSD) and 87 to 232 (QEQF…EKKR). The Cytoplasmic portion of the chain corresponds to 1-366 (MAEPITKEQP…KSEAKTKKVA (366 aa)). Pro residues predominate over residues 9–25 (QPPPPAPDPNSTYPPPS). The span at 125–141 (ESPRDSDDRCSGADHNL) shows a compositional bias: basic and acidic residues. Over residues 146–170 (PLSSQGSGNCGSDVSEATNESSPKS) the composition is skewed to polar residues. Residues 204–216 (DESRNSKYRRSGE) show a composition bias toward basic and acidic residues. Residues 228 to 288 (DEKKRARLMR…AENATLRQQL (61 aa)) enclose the bZIP domain. Residues 230 to 261 (KKRARLMRNRESAQLSRQRKKHYVEELEEKVR) form a basic motif region. Positions 267–274 (ITDLNGKI) are leucine-zipper. Positions 337–359 (PRLKPQNTLGTSKAKKSESKKSE) are disordered. Residues 367–387 (SISFLGLLFCLFLFGALAPIV) traverse the membrane as a helical segment. Topologically, residues 388 to 721 (NVNYGGISGA…RSGAPHLVTT (334 aa)) are lumenal. The span at 422–436 (TSRSGAGTGVSNSNG) shows a compositional bias: polar residues. Positions 422–462 (TSRSGAGTGVSNSNGMHRGRDSDRGARKNISATESSVTPGN) are disordered. N-linked (GlcNAc...) asparagine glycosylation is found at N450, N462, N609, and N617. The segment covering 451-462 (ISATESSVTPGN) has biased composition (polar residues). Positions 627 to 630 (RRIL) match the RRIL cleavage motif motif. N-linked (GlcNAc...) asparagine glycans are attached at residues N643 and N651.

This sequence belongs to the bZIP family. Interacts with BZIP28.

It is found in the endoplasmic reticulum membrane. It localises to the golgi apparatus membrane. The protein localises to the nucleus. Its function is as follows. Transcriptional activator involved in salt and osmotic stress responses. Functions as a stress sensor and transducer in a signaling pathway that resembles an ER stress response. Following salt stress, BZIP17 is cleaved by SBT6.1 (S1P) and S2P at the C-terminus and the N-terminal bZIP component is translocated to the nucleus, where it activates the expression of salt stress response genes. Functions as a stress sensor and transducer in ER stress signaling pathway. ER stress induces proteolysis of BZIP17 by SBT6.1 (S1P) and S2P, and the N-terminal bZIP component is translocated to the nucleus, where it activates the expression and production of ER chaperones, as well as protein involved in brassinosteroid (BR) signaling, which is required for stress acclimation and growth. This chain is bZIP transcription factor 17, found in Arabidopsis thaliana (Mouse-ear cress).